The primary structure comprises 98 residues: NADH-ubiquinone oxidoreductase chain 4L (98 aa).

The next 3 helical transmembrane spans lie at 1–21 (MTSI…GVLV), 28–48 (STLL…ALLI), and 59–79 (APLI…ALLV).

The protein belongs to the complex I subunit 4L family. Core subunit of respiratory chain NADH dehydrogenase (Complex I) which is composed of 45 different subunits.

The protein resides in the mitochondrion inner membrane. It carries out the reaction a ubiquinone + NADH + 5 H(+)(in) = a ubiquinol + NAD(+) + 4 H(+)(out). Its function is as follows. Core subunit of the mitochondrial membrane respiratory chain NADH dehydrogenase (Complex I) which catalyzes electron transfer from NADH through the respiratory chain, using ubiquinone as an electron acceptor. Part of the enzyme membrane arm which is embedded in the lipid bilayer and involved in proton translocation. This Dactylopsila trivirgata (Striped possum) protein is NADH-ubiquinone oxidoreductase chain 4L (MT-ND4L).